A 160-amino-acid chain; its full sequence is Baculoviral IAP repeat-containing protein 5.1-B (160 aa).

The stretch at 13 to 83 (QRLQDFRNMY…EGWEPDDDPW (71 aa)) is one BIR repeat. Thr-43 is modified (phosphothreonine; by CDK1). Zn(2+) contacts are provided by Cys-66, Cys-69, His-86, and Cys-93.

The protein belongs to the IAP family. As to quaternary structure, component of the CPC at least composed of survivin/birc5, incenp, cdca8/borealin and/or cdca9/dasra-A, and aurkb/aurora-B. Interacts directly with incenp (via N-terminus), and may weakly interact with aurkb (via N-terminus) to stabilize the complex. Interacts with GTP-bound ran in both the S and M phases of the cell cycle. Also found in a complex with ubiquitin-mediated signaling proteins including at least usp9x/xFAM, nploc4/npl4 and ufd1. Ubiquitination is required for centrosome-targeting.

The protein localises to the cytoplasm. It is found in the nucleus. It localises to the chromosome. The protein resides in the centromere. Its subcellular location is the cytoskeleton. The protein localises to the spindle. Functionally, component of the chromosomal passenger complex (CPC), a complex that acts as a key regulator of mitosis. The CPC complex has essential functions at the centromere in ensuring correct chromosome alignment and segregation and is required for chromatin-induced microtubule stabilization and spindle assembly. Stimulates the mitotic kinase activity of aurkb/aurora-B in the CPC. Does not appear to exhibit anti-apoptotic activity. CPC. Does not appear to exhibit anti-apoptotic activity. This is Baculoviral IAP repeat-containing protein 5.1-B (birc5.1-b) from Xenopus laevis (African clawed frog).